The primary structure comprises 925 residues: Bifunctional imidazolonepropionase/histidine ammonia-lyase (925 aa).

The interval Met1–Phe414 is imidazolonepropionase. Fe(3+) contacts are provided by His73 and His75. Zn(2+) is bound by residues His73 and His75. Residues Arg82, Tyr145, and His178 each contribute to the 4-imidazolone-5-propanoate site. Tyr145 contacts N-formimidoyl-L-glutamate. His243 provides a ligand contact to Fe(3+). Residue His243 participates in Zn(2+) binding. Residue Gln246 participates in 4-imidazolone-5-propanoate binding. Asp318 is a binding site for Fe(3+). A Zn(2+)-binding site is contributed by Asp318. N-formimidoyl-L-glutamate-binding residues include Asn320 and Gly322. Thr323 is a 4-imidazolone-5-propanoate binding site. The tract at residues Met415 to Ala925 is histidine ammonia-lyase. The 5-imidazolinone (Ala-Gly) cross-link spans Ala556–Gly558. Ser557 carries the 2,3-didehydroalanine (Ser) modification.

In the N-terminal section; belongs to the metallo-dependent hydrolases superfamily. HutI family. The protein in the C-terminal section; belongs to the PAL/histidase family. Requires Zn(2+) as cofactor. It depends on Fe(3+) as a cofactor. In terms of processing, contains an active site 4-methylidene-imidazol-5-one (MIO), which is formed autocatalytically by cyclization and dehydration of residues Ala-Ser-Gly.

It is found in the cytoplasm. The catalysed reaction is 4-imidazolone-5-propanoate + H2O = N-formimidoyl-L-glutamate. It catalyses the reaction L-histidine = trans-urocanate + NH4(+). It participates in amino-acid degradation; L-histidine degradation into L-glutamate; N-formimidoyl-L-glutamate from L-histidine: step 1/3. Its pathway is amino-acid degradation; L-histidine degradation into L-glutamate; N-formimidoyl-L-glutamate from L-histidine: step 3/3. In terms of biological role, catalyzes the hydrolytic cleavage of the carbon-nitrogen bond in imidazolone-5-propanoate to yield N-formimidoyl-L-glutamate. It is the third step in the universal histidine degradation pathway. The protein is Bifunctional imidazolonepropionase/histidine ammonia-lyase (hutIH) of Brucella melitensis biotype 1 (strain ATCC 23456 / CCUG 17765 / NCTC 10094 / 16M).